The following is a 591-amino-acid chain: Aspartate--tRNA(Asp/Asn) ligase (591 aa).

Residue Glu-176 participates in L-aspartate binding. Residues 200–203 (QLFK) are aspartate. An L-aspartate-binding site is contributed by Arg-222. Residues 222–224 (RDE) and Gln-231 contribute to the ATP site. Residue His-450 coordinates L-aspartate. Glu-484 serves as a coordination point for ATP. L-aspartate is bound at residue Arg-491. ATP is bound at residue 536–539 (GLDR).

Belongs to the class-II aminoacyl-tRNA synthetase family. Type 1 subfamily. As to quaternary structure, homodimer.

The protein localises to the cytoplasm. The catalysed reaction is tRNA(Asx) + L-aspartate + ATP = L-aspartyl-tRNA(Asx) + AMP + diphosphate. Functionally, aspartyl-tRNA synthetase with relaxed tRNA specificity since it is able to aspartylate not only its cognate tRNA(Asp) but also tRNA(Asn). Reaction proceeds in two steps: L-aspartate is first activated by ATP to form Asp-AMP and then transferred to the acceptor end of tRNA(Asp/Asn). In Bacillus cereus (strain ATCC 10987 / NRS 248), this protein is Aspartate--tRNA(Asp/Asn) ligase.